Consider the following 365-residue polypeptide: UBX domain-containing protein 2B (365 aa).

Positions M1–F97 are disordered. Basic and acidic residues-rich tracts occupy residues D50–T63 and L73–Q95. The 66-residue stretch at D175 to V240 folds into the SEP domain. Positions D286–Q363 constitute a UBX domain.

The protein belongs to the NSFL1C family.

Its subcellular location is the nucleus. It is found in the cytoplasm. The protein localises to the cytosol. The protein resides in the endoplasmic reticulum. It localises to the golgi apparatus. Its subcellular location is the cytoskeleton. It is found in the microtubule organizing center. The protein localises to the centrosome. Functionally, adapter protein required for Golgi and endoplasmic reticulum biogenesis. Involved in Golgi and endoplasmic reticulum maintenance during interphase and in their reassembly at the end of mitosis. Regulates the centrosomal levels of kinase AURKA/Aurora A during mitotic progression by promoting AURKA removal from centrosomes in prophase. Also, regulates spindle orientation during mitosis. This chain is UBX domain-containing protein 2B (UBXN2B), found in Gallus gallus (Chicken).